A 283-amino-acid chain; its full sequence is Protein FAM78A (283 aa).

The protein belongs to the FAM78 family.

This Homo sapiens (Human) protein is Protein FAM78A (FAM78A).